We begin with the raw amino-acid sequence, 128 residues long: Ribonuclease P protein component (128 aa).

It belongs to the RnpA family. Consists of a catalytic RNA component (M1 or rnpB) and a protein subunit.

It carries out the reaction Endonucleolytic cleavage of RNA, removing 5'-extranucleotides from tRNA precursor.. Functionally, RNaseP catalyzes the removal of the 5'-leader sequence from pre-tRNA to produce the mature 5'-terminus. It can also cleave other RNA substrates such as 4.5S RNA. The protein component plays an auxiliary but essential role in vivo by binding to the 5'-leader sequence and broadening the substrate specificity of the ribozyme. The protein is Ribonuclease P protein component of Prochlorococcus marinus (strain AS9601).